The sequence spans 278 residues: 4-deoxy-L-threo-5-hexosulose-uronate ketol-isomerase (278 aa).

Positions 196, 198, 203, and 245 each coordinate Zn(2+).

Belongs to the KduI family. Zn(2+) serves as cofactor.

The catalysed reaction is 5-dehydro-4-deoxy-D-glucuronate = 3-deoxy-D-glycero-2,5-hexodiulosonate. The protein operates within glycan metabolism; pectin degradation; 2-dehydro-3-deoxy-D-gluconate from pectin: step 4/5. Catalyzes the isomerization of 5-dehydro-4-deoxy-D-glucuronate to 3-deoxy-D-glycero-2,5-hexodiulosonate. In Edwardsiella ictaluri (strain 93-146), this protein is 4-deoxy-L-threo-5-hexosulose-uronate ketol-isomerase.